The chain runs to 314 residues: Thioredoxin reductase aclD (314 aa).

Residues 13 to 16 (GGPA), 35 to 40 (DSKSYR), H47, and A112 each bind FAD. C136 and C139 are oxidised to a cystine. FAD-binding positions include D281 and 288–289 (AA).

This sequence belongs to the class-II pyridine nucleotide-disulfide oxidoreductase family. In terms of assembly, homodimer. FAD is required as a cofactor.

It functions in the pathway mycotoxin biosynthesis. Its function is as follows. Thioredoxin reductase; part of the gene cluster that mediates the biosynthesis of aspirochlorine (or antibiotic A30641), an unusual halogenated spiro compound with distinctive antifungal properties due to selective inhibition of protein biosynthesis, and which is also active against bacteria, viruses, and murine tumor cells. The non-ribosomal peptide synthetase (NRPS) aclP is responsible the formation of the diketopiperazine (DKP) core from the condensation of 2 phenylalanine residues. One Phe residue is tailored into chlorotyrosine by hydroxylation and chlorination, whereas the second Phe undergoes an unprecedented C-C bond cleavage to be converted into glycine. After formation of the DKP, sulfur is incorporated into the DKP by conjugation with glutathione by aclG, followed by its stepwise degradation to the thiol by aclI, aclJ and aclK, and the dithiol oxidation by aclT. In addition, oxygenases (aclB, aclC, aclL and aclO) and O-methyltransferases (aclM and aclU) act as tailoring enzymes to produce the intermediate dechloroaspirochlorine. Ultimately, chlorination of dechloroaspirochlorine by the halogenase aclH is the last step in the aspirochlorine pathway. The chain is Thioredoxin reductase aclD from Aspergillus oryzae (strain ATCC 42149 / RIB 40) (Yellow koji mold).